Consider the following 86-residue polypeptide: Dynein light chain 1, cytoplasmic (86 aa).

The protein belongs to the dynein light chain family. As to quaternary structure, homodimer. Cytoplasmic dynein consists of two catalytic heavy chains (HCs) and a number of non-catalytic subunits which present intermediate chains (ICs), light intermediate chains (LICs) and light chains (LCs). Component of the nuclear pore complex (NPC). NPC constitutes the exclusive means of nucleocytoplasmic transport. NPCs allow the passive diffusion of ions and small molecules and the active, nuclear transport receptor-mediated bidirectional transport of macromolecules such as proteins, RNAs, ribonucleoparticles (RNPs), and ribosomal subunits across the nuclear envelope. Due to its 8-fold rotational symmetry, all subunits are present with 8 copies or multiples thereof.

It localises to the cytoplasm. The protein resides in the cytoskeleton. Its subcellular location is the nucleus. It is found in the nuclear pore complex. Functionally, acts as one of several non-catalytic accessory components of the cytoplasmic dynein complex that are thought to be involved in linking dynein to cargos and to adapter proteins that regulate dynein function. Cytoplasmic dynein 1 acts as a motor for the intracellular retrograde motility of vesicles and organelles along microtubules. May play a role in changing or maintaining the spatial distribution of cytoskeletal structures. Also a component of the nuclear pore complex. The polypeptide is Dynein light chain 1, cytoplasmic (DYN2) (Candida glabrata (strain ATCC 2001 / BCRC 20586 / JCM 3761 / NBRC 0622 / NRRL Y-65 / CBS 138) (Yeast)).